A 389-amino-acid chain; its full sequence is Fructose-1,6-bisphosphate aldolase/phosphatase (389 aa).

Asp-17 serves as the catalytic Proton acceptor; for FBP phosphatase activity. Residues Asp-17, His-24, Asp-57, and Asp-58 each coordinate Mg(2+). Residue His-24 participates in beta-D-fructose 1,6-bisphosphate binding. His-24 lines the dihydroxyacetone phosphate pocket. Residue Tyr-95 coordinates beta-D-fructose 1,6-bisphosphate. Gln-99 provides a ligand contact to Mg(2+). 108–109 lines the beta-D-fructose 1,6-bisphosphate pocket; that stretch reads GN. Asp-136 provides a ligand contact to Mg(2+). Lys-137 serves as a coordination point for beta-D-fructose 1,6-bisphosphate. Position 137 (Lys-137) interacts with dihydroxyacetone phosphate. The active-site Proton donor/acceptor; for FBP aldolase activity is the Tyr-233. Mg(2+) contacts are provided by Lys-236, Asp-237, and Asp-238. Catalysis depends on Lys-236, which acts as the Schiff-base intermediate with DHAP; for FBP aldolase activity. Residues 246–247, Arg-270, Asp-291, and Tyr-352 contribute to the beta-D-fructose 1,6-bisphosphate site; that span reads QS. Dihydroxyacetone phosphate is bound by residues Arg-270 and Asp-291.

The protein belongs to the FBP aldolase/phosphatase family. As to quaternary structure, homooctamer; dimer of tetramers. The cofactor is Mg(2+).

It catalyses the reaction beta-D-fructose 1,6-bisphosphate + H2O = beta-D-fructose 6-phosphate + phosphate. It carries out the reaction beta-D-fructose 1,6-bisphosphate = D-glyceraldehyde 3-phosphate + dihydroxyacetone phosphate. The protein operates within carbohydrate biosynthesis; gluconeogenesis. Functionally, catalyzes two subsequent steps in gluconeogenesis: the aldol condensation of dihydroxyacetone phosphate (DHAP) and glyceraldehyde-3-phosphate (GA3P) to fructose-1,6-bisphosphate (FBP), and the dephosphorylation of FBP to fructose-6-phosphate (F6P). This Methanocaldococcus jannaschii (strain ATCC 43067 / DSM 2661 / JAL-1 / JCM 10045 / NBRC 100440) (Methanococcus jannaschii) protein is Fructose-1,6-bisphosphate aldolase/phosphatase.